Reading from the N-terminus, the 81-residue chain is Photosystem I iron-sulfur center (81 aa).

2 4Fe-4S ferredoxin-type domains span residues Ser2–Trp31 and Ile39–Tyr68. The [4Fe-4S] cluster site is built by Cys11, Cys14, Cys17, Cys21, Cys48, Cys51, Cys54, and Cys58.

As to quaternary structure, the eukaryotic PSI reaction center is composed of at least 11 subunits. It depends on [4Fe-4S] cluster as a cofactor.

The protein resides in the plastid. Its subcellular location is the chloroplast thylakoid membrane. It catalyses the reaction reduced [plastocyanin] + hnu + oxidized [2Fe-2S]-[ferredoxin] = oxidized [plastocyanin] + reduced [2Fe-2S]-[ferredoxin]. In terms of biological role, apoprotein for the two 4Fe-4S centers FA and FB of photosystem I (PSI); essential for photochemical activity. FB is the terminal electron acceptor of PSI, donating electrons to ferredoxin. The C-terminus interacts with PsaA/B/D and helps assemble the protein into the PSI complex. Required for binding of PsaD and PsaE to PSI. PSI is a plastocyanin/cytochrome c6-ferredoxin oxidoreductase, converting photonic excitation into a charge separation, which transfers an electron from the donor P700 chlorophyll pair to the spectroscopically characterized acceptors A0, A1, FX, FA and FB in turn. The sequence is that of Photosystem I iron-sulfur center from Rhodomonas salina (Cryptomonas salina).